The primary structure comprises 302 residues: Acetylglutamate kinase (302 aa).

Substrate contacts are provided by residues 75–76, arginine 97, and asparagine 198; that span reads GG.

This sequence belongs to the acetylglutamate kinase family. ArgB subfamily.

The protein resides in the cytoplasm. It catalyses the reaction N-acetyl-L-glutamate + ATP = N-acetyl-L-glutamyl 5-phosphate + ADP. It functions in the pathway amino-acid biosynthesis; L-arginine biosynthesis; N(2)-acetyl-L-ornithine from L-glutamate: step 2/4. Catalyzes the ATP-dependent phosphorylation of N-acetyl-L-glutamate. The protein is Acetylglutamate kinase of Leifsonia xyli subsp. xyli (strain CTCB07).